Reading from the N-terminus, the 765-residue chain is Putative ankyrin repeat protein L371 (765 aa).

9 ANK repeats span residues 60 to 89, 93 to 122, 132 to 161, 165 to 194, 198 to 227, 232 to 261, 265 to 295, 322 to 353, and 357 to 395; these read NGNYMIFFAIIMNSSTILKKLIKYGARLDV, EGNSVMYYPIKFGYYEIIDVLIDYDSKIIG, KGSVPLFYAIKYRNKYALQQLLSKDANANY, DNVNALHMAVLKKDISMVKLVIKHIKNLNA, QGSTALHYACNFQLYDITKLLLDNGADQNI, LDFYPIFYSVIQNDINISKLLVDYGANPNH, EGNTILHYCVIYNHMEIFDYIMNNYVIRCRS, DGLTVVHLMLYDYKEEYDNFLKKLIPYCNLNY, and TGNTILHLIAENNIWNKFDNLLNVKKLNIFIRNNNGKTV.

The protein is Putative ankyrin repeat protein L371 of Acanthamoeba polyphaga mimivirus (APMV).